We begin with the raw amino-acid sequence, 85 residues long: Toxin 3FTx-Lei1 (85 aa).

The signal sequence occupies residues 1–21 (MKTLLLSLVVVTFVCLDLAHT). Cystine bridges form between Cys24/Cys45, Cys27/Cys32, Cys38/Cys63, Cys67/Cys78, and Cys79/Cys84.

The protein belongs to the three-finger toxin family. Ancestral subfamily. As to expression, expressed by the venom gland.

It localises to the secreted. The protein is Toxin 3FTx-Lei1 of Leioheterodon madagascariensis (Malagasy giant hognose snake).